Reading from the N-terminus, the 349-residue chain is Isopentenyl-diphosphate delta-isomerase (349 aa).

Substrate is bound at residue 6–7 (RK). FMN is bound by residues 62 to 64 (AMT), Ser-93, and Asn-122. Position 152 (Gln-152) interacts with substrate. A Mg(2+)-binding site is contributed by Glu-153. FMN-binding positions include Lys-184, Thr-214, 258 to 259 (GG), and 280 to 281 (AG).

It belongs to the IPP isomerase type 2 family. As to quaternary structure, homooctamer. Dimer of tetramers. FMN is required as a cofactor. NADPH serves as cofactor. Requires Mg(2+) as cofactor.

Its subcellular location is the cytoplasm. The catalysed reaction is isopentenyl diphosphate = dimethylallyl diphosphate. Its function is as follows. Involved in the biosynthesis of isoprenoids. Catalyzes the 1,3-allylic rearrangement of the homoallylic substrate isopentenyl (IPP) to its allylic isomer, dimethylallyl diphosphate (DMAPP). The chain is Isopentenyl-diphosphate delta-isomerase from Bacillus cereus (strain ATCC 14579 / DSM 31 / CCUG 7414 / JCM 2152 / NBRC 15305 / NCIMB 9373 / NCTC 2599 / NRRL B-3711).